We begin with the raw amino-acid sequence, 364 residues long: MASFMKQLSLVLSFIALALAGCAVYQNTQTAMKDQLKVTPTWLDNTLKSTNLLSLGLGKPSGGKLGDEACVFSAVKEVVVAAINAEARMGASLIRLFFHDCFVDGCDAGLLLNDTATFTGEQTAAGNNNSVRGFAVIEQAKQNVKTQMPDMSVSCADILSIAARDSFEKFSGSTYTVTLGRKDARTANFTGANTQLVGPNENLTSQLTKFAAKGFNGTEMVALLGSHTIGFARCPLLCISTFINPARVSTLNCNCSGTVNATGLVGLDPTPTTWDQRYFSDVVNDQGLLFSDNELLKGNTTNAAVRRYRDAMGAFLTDFAAAMVKMSNLPPSPGVALEIRDVCSRVNANSVDPCEESRLLASPD.

Residues 1 to 20 (MASFMKQLSLVLSFIALALA) form the signal peptide. Positions 21 to 66 (GCAVYQNTQTAMKDQLKVTPTWLDNTLKSTNLLSLGLGKPSGGKLG) are excised as a propeptide. H99 acts as the Proton acceptor in catalysis. Residues D100, V103, G105, and D107 each coordinate Ca(2+). C101 and C106 are oxidised to a cystine. 4 N-linked (GlcNAc...) asparagine glycosylation sites follow: N113, N188, N202, and N216. 2 disulfide bridges follow: C155-C343 and C234-C255. H227 provides a ligand contact to heme b. T228 contributes to the Ca(2+) binding site. N-linked (GlcNAc...) asparagine glycosylation is found at N254 and N260. 3 residues coordinate Ca(2+): D268, T270, and D275. N-linked (GlcNAc...) asparagine glycosylation occurs at N299.

It belongs to the peroxidase family. Classical plant (class III) peroxidase subfamily. The cofactor is Ca(2+). Requires heme b as cofactor. As to expression, highly expressed in suspension cultured cells and calli. Weak expression also found in the stems of intact plants. No expression in leaf, tuberous root and non-tuberous root.

Its subcellular location is the secreted. The catalysed reaction is 2 a phenolic donor + H2O2 = 2 a phenolic radical donor + 2 H2O. Functionally, removal of H(2)O(2), oxidation of toxic reductants, biosynthesis and degradation of lignin, suberization, auxin catabolism, response to environmental stresses such as wounding, pathogen attack and oxidative stress. These functions might be dependent on each isozyme/isoform in each plant tissue. May contribute to protection against cold-induced oxidative stress. In Ipomoea batatas (Sweet potato), this protein is Anionic peroxidase.